The primary structure comprises 1132 residues: NUT family member 1 (1132 aa).

Disordered stretches follow at residues Met-1–Ser-56, Ala-337–Pro-365, Leu-383–Tyr-405, Glu-476–Arg-584, Arg-693–Asp-714, Asp-873–Ser-892, and Pro-922–Leu-1017. A compositionally biased stretch (pro residues) spans Ala-21–Asp-36. A compositionally biased stretch (basic residues) spans Ala-337 to Gln-352. A compositionally biased stretch (acidic residues) spans Glu-395–Met-404. Polar residues-rich tracts occupy residues Ser-487–Gly-497, Met-697–Ser-706, and Glu-883–Ser-892. Residues Gly-932–Lys-942 show a composition bias toward basic and acidic residues. Over residues Gln-950–Gly-971 the composition is skewed to polar residues. A phosphoserine mark is found at Ser-1026, Ser-1029, and Ser-1031. The interval Ser-1031–Gln-1132 is disordered. N5-methylglutamine is present on Gln-1046. The segment covering Gly-1123 to Gln-1132 has biased composition (basic residues).

The protein belongs to the NUT family. In terms of processing, methylated at Gln-1046 by N6AMT1. Phosphorylation on Ser-1026, Ser-1029 or Ser-1031 is important for cytoplasmic export. Specifically expressed in testis.

The protein resides in the cytoplasm. The protein localises to the nucleus. Plays a role in the regulation of proliferation. Regulates TERT expression by modulating SP1 binding to TERT promoter binding sites. The sequence is that of NUT family member 1 from Homo sapiens (Human).